We begin with the raw amino-acid sequence, 264 residues long: Thymidylate synthase (264 aa).

Residue Arg21 participates in dUMP binding. Residue His51 coordinates (6R)-5,10-methylene-5,6,7,8-tetrahydrofolate. 126 to 127 lines the dUMP pocket; that stretch reads RR. Residue Cys146 is the Nucleophile of the active site. Residues 166–169, Asn177, and 207–209 each bind dUMP; these read RSCD and HLY. Asp169 is a binding site for (6R)-5,10-methylene-5,6,7,8-tetrahydrofolate. Ala263 lines the (6R)-5,10-methylene-5,6,7,8-tetrahydrofolate pocket.

The protein belongs to the thymidylate synthase family. Bacterial-type ThyA subfamily. In terms of assembly, homodimer.

The protein resides in the cytoplasm. It carries out the reaction dUMP + (6R)-5,10-methylene-5,6,7,8-tetrahydrofolate = 7,8-dihydrofolate + dTMP. Its pathway is pyrimidine metabolism; dTTP biosynthesis. Catalyzes the reductive methylation of 2'-deoxyuridine-5'-monophosphate (dUMP) to 2'-deoxythymidine-5'-monophosphate (dTMP) while utilizing 5,10-methylenetetrahydrofolate (mTHF) as the methyl donor and reductant in the reaction, yielding dihydrofolate (DHF) as a by-product. This enzymatic reaction provides an intracellular de novo source of dTMP, an essential precursor for DNA biosynthesis. The polypeptide is Thymidylate synthase (Serratia proteamaculans (strain 568)).